Consider the following 354-residue polypeptide: Sulfate/thiosulfate import ATP-binding protein CysA (354 aa).

The 235-residue stretch at 3-237 (IEVRGLSKRF…PATPFVYGFL (235 aa)) folds into the ABC transporter domain. 35–42 (GPSGCGKT) contributes to the ATP binding site.

This sequence belongs to the ABC transporter superfamily. Sulfate/tungstate importer (TC 3.A.1.6) family. The complex is composed of two ATP-binding proteins (CysA), two transmembrane proteins (CysT and CysW) and a solute-binding protein (CysP).

The protein localises to the cell inner membrane. It carries out the reaction sulfate(out) + ATP + H2O = sulfate(in) + ADP + phosphate + H(+). The catalysed reaction is thiosulfate(out) + ATP + H2O = thiosulfate(in) + ADP + phosphate + H(+). Part of the ABC transporter complex CysAWTP involved in sulfate/thiosulfate import. Responsible for energy coupling to the transport system. The chain is Sulfate/thiosulfate import ATP-binding protein CysA from Bordetella pertussis (strain Tohama I / ATCC BAA-589 / NCTC 13251).